The following is a 714-amino-acid chain: Hormonally up-regulated neu tumor-associated kinase (714 aa).

Low complexity predominate over residues methionine 1–alanine 15. Residues methionine 1 to alanine 26 form a disordered region. Residues leucine 62 to leucine 320 form the Protein kinase domain. ATP-binding positions include leucine 68 to valine 76 and lysine 91. The Proton acceptor role is filled by aspartate 186. A compositionally biased stretch (basic and acidic residues) spans lysine 437 to leucine 461. Disordered regions lie at residues lysine 437 to leucine 471, methionine 518 to aspartate 552, and alanine 590 to arginine 660. The span at leucine 599 to leucine 611 shows a compositional bias: low complexity. Over residues alanine 623 to glycine 635 the composition is skewed to basic and acidic residues.

It belongs to the protein kinase superfamily. CAMK Ser/Thr protein kinase family. SNF1 subfamily.

It carries out the reaction L-seryl-[protein] + ATP = O-phospho-L-seryl-[protein] + ADP + H(+). It catalyses the reaction L-threonyl-[protein] + ATP = O-phospho-L-threonyl-[protein] + ADP + H(+). The chain is Hormonally up-regulated neu tumor-associated kinase (HUNK) from Pan troglodytes (Chimpanzee).